We begin with the raw amino-acid sequence, 248 residues long: Adenosylcobinamide-GDP ribazoletransferase (248 aa).

Transmembrane regions (helical) follow at residues 3 to 23 (ELKALILSIQFMTGIPIPINI), 35 to 55 (SYFPVVGLLIGGILYIAYLLL), 63 to 83 (IVMTFLVAFSYILTRGMHIDG), 109 to 129 (LGTNGVLALVFMVILKILFLS), 135 to 155 (LLFSALLVSPVIARLSVVFSI), 180 to 199 (FVIALLISTIAGYFVMPLKD), 200 to 219 (LALLYVISLSFTCLISKYIS), and 228 to 248 (DTLGAVNEFVELIAFIYFSIL).

Belongs to the CobS family. Mg(2+) is required as a cofactor.

The protein resides in the cell membrane. It carries out the reaction alpha-ribazole + adenosylcob(III)inamide-GDP = adenosylcob(III)alamin + GMP + H(+). It catalyses the reaction alpha-ribazole 5'-phosphate + adenosylcob(III)inamide-GDP = adenosylcob(III)alamin 5'-phosphate + GMP + H(+). Its pathway is cofactor biosynthesis; adenosylcobalamin biosynthesis; adenosylcobalamin from cob(II)yrinate a,c-diamide: step 7/7. In terms of biological role, joins adenosylcobinamide-GDP and alpha-ribazole to generate adenosylcobalamin (Ado-cobalamin). Also synthesizes adenosylcobalamin 5'-phosphate from adenosylcobinamide-GDP and alpha-ribazole 5'-phosphate. This Caldanaerobacter subterraneus subsp. tengcongensis (strain DSM 15242 / JCM 11007 / NBRC 100824 / MB4) (Thermoanaerobacter tengcongensis) protein is Adenosylcobinamide-GDP ribazoletransferase.